We begin with the raw amino-acid sequence, 114 residues long: UPF0212 protein Mbur_0968 (114 aa).

Belongs to the UPF0212 family.

The protein is UPF0212 protein Mbur_0968 of Methanococcoides burtonii (strain DSM 6242 / NBRC 107633 / OCM 468 / ACE-M).